A 372-amino-acid polypeptide reads, in one-letter code: Gustatory and pheromone receptor 39a, isoform B (372 aa).

At 1–32 (MGTRNRKLLFFLHYQRYLGLTNLDFSKSLHIY) the chain is on the cytoplasmic side. A helical membrane pass occupies residues 33 to 53 (WLHGTWSSTAIQIVVVGVFMA). Topologically, residues 54–59 (ALLGAL) are extracellular. Residues 60 to 80 (AESLYYMETKSQTGNTFDNAV) traverse the membrane as a helical segment. The Cytoplasmic portion of the chain corresponds to 81–122 (ILTTSVTQLLANLWLRSQQKSQVNLLQRLSQVVELLQFEPYA). A helical transmembrane segment spans residues 123-143 (VPQFRWLYRIWLLVCLIYGAM). At 144 to 147 (VTHF) the chain is on the extracellular side. Residues 148–168 (GINWLTTMQISRVLTLIGFVY) traverse the membrane as a helical segment. The Cytoplasmic portion of the chain corresponds to 169–224 (RCVLANFQFTCYTGMVVILKKLLQVQVKQLEHLVSTTTISMAGVAGCLRTHDEILL). A helical transmembrane segment spans residues 225 to 245 (LGQRELIAVYGGVILFLFIYQ). At 246-265 (VMQCILIFYISNLEGFHSSN) the chain is on the extracellular side. A helical membrane pass occupies residues 266-286 (DLVLIFCWLAPMLFYLILPLV). The Cytoplasmic segment spans residues 287-348 (VNDIHNQANK…KSTLFKLFTA (62 aa)). Residues 349-368 (IFTYMVILVQFKEMENSTKS) traverse the membrane as a helical segment. A topological domain (extracellular) is located at residue Ile369.

This sequence belongs to the insect chemoreceptor superfamily. Gustatory receptor (GR) family. Gr21a subfamily. As to expression, expressed in the adult labellar chemosensory neurons. In larvae, is expressed in neurons of the terminal external chemosensory organ, as well as in the dorsal and posterior pharyngeal sense organs.

It is found in the cell membrane. Its function is as follows. Gustatory receptor which mediates acceptance or avoidance behavior, depending on its substrates. Plays a role in sustaining courtship behavior in males, possibly through the reception of a stimulating arrestant pheromone. This chain is Gustatory and pheromone receptor 39a, isoform B (Gr39a), found in Drosophila melanogaster (Fruit fly).